Consider the following 310-residue polypeptide: tRNA uridine(34) hydroxylase (310 aa).

Residues 123 to 217 (ADPDVVVIDV…YLEKVPEDES (95 aa)) enclose the Rhodanese domain. Catalysis depends on C177, which acts as the Cysteine persulfide intermediate.

Belongs to the TrhO family.

It catalyses the reaction uridine(34) in tRNA + AH2 + O2 = 5-hydroxyuridine(34) in tRNA + A + H2O. Its function is as follows. Catalyzes oxygen-dependent 5-hydroxyuridine (ho5U) modification at position 34 in tRNAs. In Acaryochloris marina (strain MBIC 11017), this protein is tRNA uridine(34) hydroxylase.